Reading from the N-terminus, the 225-residue chain is uncharacterized protein (225 aa).

The next 6 helical transmembrane spans lie at 1 to 21 (MFIGIVSLFLTVLVYLGAKKV), 31 to 51 (SPLLVTPAVLVGLLLLVNVPY), 56 to 76 (LGGGLLTDMLQPATVAFAIPL), 88 to 108 (VEIILNVAVGSCIAIISTALI), 145 to 165 (VTAVFVILTALLGTVIGPMVI), and 205 to 225 (VSMILAAIMTLCAAPFLLSFM).

The protein belongs to the YohK (E.coli)/YwbG (IPA-22R) (B.subtilis) family.

The protein localises to the cell membrane. This is an uncharacterized protein from Bacillus subtilis (strain 168).